Reading from the N-terminus, the 155-residue chain is Large ribosomal subunit protein bL17 (155 aa).

It belongs to the bacterial ribosomal protein bL17 family. Part of the 50S ribosomal subunit. Contacts protein L32.

In Syntrophotalea carbinolica (strain DSM 2380 / NBRC 103641 / GraBd1) (Pelobacter carbinolicus), this protein is Large ribosomal subunit protein bL17.